The chain runs to 296 residues: Nucleotide-binding protein SEQ_0857 (296 aa).

13 to 20 provides a ligand contact to ATP; it reads GMSGAGKT. 63–66 lines the GTP pocket; sequence DMRS.

This sequence belongs to the RapZ-like family.

Its function is as follows. Displays ATPase and GTPase activities. This chain is Nucleotide-binding protein SEQ_0857, found in Streptococcus equi subsp. equi (strain 4047).